The chain runs to 92 residues: Putative transition state regulator Abh (92 aa).

Positions 5–50 (GVVRKVDELGRIVMPIELRRALDIAIKDSIEFFVDGDKIILKKYKP) constitute a SpoVT-AbrB domain.

It to B.subtilis AbrB and SpoVT.

The protein is Putative transition state regulator Abh (abh) of Bacillus subtilis (strain 168).